The primary structure comprises 220 residues: 7-cyano-7-deazaguanine synthase (220 aa).

10–20 (FSGGQDSTTCL) is an ATP binding site. Zn(2+) contacts are provided by C186, C195, C198, and C201.

This sequence belongs to the QueC family. In terms of assembly, homodimer. Zn(2+) is required as a cofactor.

The enzyme catalyses 7-carboxy-7-deazaguanine + NH4(+) + ATP = 7-cyano-7-deazaguanine + ADP + phosphate + H2O + H(+). It participates in purine metabolism; 7-cyano-7-deazaguanine biosynthesis. In terms of biological role, catalyzes the ATP-dependent conversion of 7-carboxy-7-deazaguanine (CDG) to 7-cyano-7-deazaguanine (preQ(0)). This Bacillus cereus (strain G9842) protein is 7-cyano-7-deazaguanine synthase.